The chain runs to 208 residues: Small ribosomal subunit protein uS3 (208 aa).

Residues 16 to 85 (VDEYLKNKLP…KPQIEVKQIE (70 aa)) form the KH type-2 domain.

The protein belongs to the universal ribosomal protein uS3 family. As to quaternary structure, part of the 30S ribosomal subunit.

Binds the lower part of the 30S subunit head. This is Small ribosomal subunit protein uS3 from Methanococcus aeolicus (strain ATCC BAA-1280 / DSM 17508 / OCM 812 / Nankai-3).